Reading from the N-terminus, the 277-residue chain is Bifunctional protein FolD (277 aa).

NADP(+)-binding positions include 156–158 (GRS), Ser-183, and Ile-224.

The protein belongs to the tetrahydrofolate dehydrogenase/cyclohydrolase family. As to quaternary structure, homodimer.

It catalyses the reaction (6R)-5,10-methylene-5,6,7,8-tetrahydrofolate + NADP(+) = (6R)-5,10-methenyltetrahydrofolate + NADPH. The enzyme catalyses (6R)-5,10-methenyltetrahydrofolate + H2O = (6R)-10-formyltetrahydrofolate + H(+). It participates in one-carbon metabolism; tetrahydrofolate interconversion. Functionally, catalyzes the oxidation of 5,10-methylenetetrahydrofolate to 5,10-methenyltetrahydrofolate and then the hydrolysis of 5,10-methenyltetrahydrofolate to 10-formyltetrahydrofolate. The polypeptide is Bifunctional protein FolD (Kosmotoga olearia (strain ATCC BAA-1733 / DSM 21960 / TBF 19.5.1)).